The sequence spans 149 residues: Large ribosomal subunit protein bL9 (149 aa).

This sequence belongs to the bacterial ribosomal protein bL9 family.

Its function is as follows. Binds to the 23S rRNA. The protein is Large ribosomal subunit protein bL9 of Christiangramia forsetii (strain DSM 17595 / CGMCC 1.15422 / KT0803) (Gramella forsetii).